Consider the following 260-residue polypeptide: MMETALLRYCVNFSGHKKISAHQRSNSEIPKTSPGGCEDEWCARVLSRRSVMASGLVSSTTALAFPREGLAVVKQGLLAGRVPGLSEPDEEGWRTYRRPDEKSGGHGVGWSPIIPYAFSVPQDWNEVPVSIADLGGTEIDLRFASPKEGRLSVIVAPVLRFADNLGDDVKIENIGQPAKVINAFGPEVIGENVEGKVLSSNVAEHDGRLYYQFELEPPHVLITATAAGNRLYLFSVTGNGLQWKRHYKDLKRIASSFRIV.

It belongs to the PsbP family.

It localises to the plastid. The protein localises to the chloroplast thylakoid lumen. The sequence is that of PsbP domain-containing protein 4, chloroplastic (PPD4) from Arabidopsis thaliana (Mouse-ear cress).